Here is a 502-residue protein sequence, read N- to C-terminus: MTEKKYIVALDQGTTSSRAVVMDHDANIVSVSQREFEQIYPKPGWVEHDPMEIWASQSSTLVEVLAKADISSDQIAAIGITNQRETAIVWERETGKPIYNAIVWQCRRTADICEQLKRDGLEDYIRDNTGLVVDPYFSGTKVKWILDHVEGSRERAKRGELLFGTVDTWLIWKMTQGRVHVTDYTNASRTMLFNIHDLDWDDKMLDVLDIPRAMLPQVRKSSEVYGQTNIGGKGGTRIPIAGIAGDQQAALFGQLCVKEGMAKNTYGTGCFMLMNTGEKAVKSENGLLTTIACGPSGEVNYALEGAVFMAGASIQWLRDEMKLISDAFDSEYFATKVKDTNGVYVVPAFTGLGAPYWDPYARGAIFGLTRGVNSNHIIRATLESIAYQTRDVLEAMQADSGIRLHALRVDGGAVANNFLMQFQSDILGTRVERPEVREVTALGAAYLAGLAVGYWQNLDELQEKAVIEREFRPGIETTERNYRYSGWKKAVKRAMAWEDHDK.

Thr-14 is a binding site for ADP. The ATP site is built by Thr-14, Thr-15, and Ser-16. Thr-14 is a binding site for sn-glycerol 3-phosphate. Residue Arg-18 participates in ADP binding. Sn-glycerol 3-phosphate contacts are provided by Arg-84, Glu-85, Tyr-136, and Asp-246. 5 residues coordinate glycerol: Arg-84, Glu-85, Tyr-136, Asp-246, and Gln-247. ADP contacts are provided by Thr-268 and Gly-311. Residues Thr-268, Gly-311, Gln-315, and Gly-412 each coordinate ATP. Residues Gly-412 and Asn-416 each contribute to the ADP site.

The protein belongs to the FGGY kinase family. In terms of assembly, homotetramer and homodimer (in equilibrium). Heterodimer with EIIA-Glc. Binds 1 zinc ion per glycerol kinase EIIA-Glc dimer. The zinc ion is important for dimerization.

The enzyme catalyses glycerol + ATP = sn-glycerol 3-phosphate + ADP + H(+). It functions in the pathway polyol metabolism; glycerol degradation via glycerol kinase pathway; sn-glycerol 3-phosphate from glycerol: step 1/1. With respect to regulation, activity of this regulatory enzyme is affected by several metabolites. Allosterically and non-competitively inhibited by fructose 1,6-bisphosphate (FBP) and unphosphorylated phosphocarrier protein EIIA-Glc (III-Glc), an integral component of the bacterial phosphotransferase (PTS) system. In terms of biological role, key enzyme in the regulation of glycerol uptake and metabolism. Catalyzes the phosphorylation of glycerol to yield sn-glycerol 3-phosphate. In Salmonella agona (strain SL483), this protein is Glycerol kinase.